The following is a 109-amino-acid chain: Oncomodulin (109 aa).

Position 2 is an N-acetylserine (S2). EF-hand domains are found at residues 39–74 and 78–109; these read MSASQLKDIFQFIDNDQSGYLDEDELKYFLQRFQSD and LTESETKSLMDAADNDGDGKIGADEFQEMVHS. Residues D52, D54, S56, Y58, E63, D91, D93, D95, K97, and E102 each contribute to the Ca(2+) site. The tract at residues 82 to 109 is disordered; that stretch reads ETKSLMDAADNDGDGKIGADEFQEMVHS. Over residues 94-109 the composition is skewed to basic and acidic residues; sequence GDGKIGADEFQEMVHS.

This sequence belongs to the parvalbumin family. In terms of tissue distribution, found in tumor tissues and not detected in normal tissues.

Has some calmodulin-like activity with respect to enzyme activation and growth regulation. Binds two calcium ions. This Mus musculus (Mouse) protein is Oncomodulin (Ocm).